The sequence spans 119 residues: Large ribosomal subunit protein uL18 (119 aa).

Belongs to the universal ribosomal protein uL18 family. In terms of assembly, part of the 50S ribosomal subunit; part of the 5S rRNA/L5/L18/L25 subcomplex. Contacts the 5S and 23S rRNAs.

This is one of the proteins that bind and probably mediate the attachment of the 5S RNA into the large ribosomal subunit, where it forms part of the central protuberance. The sequence is that of Large ribosomal subunit protein uL18 from Cupriavidus taiwanensis (strain DSM 17343 / BCRC 17206 / CCUG 44338 / CIP 107171 / LMG 19424 / R1) (Ralstonia taiwanensis (strain LMG 19424)).